A 126-amino-acid polypeptide reads, in one-letter code: SH2 domain-containing protein 1A (126 aa).

One can recognise an SH2 domain in the interval 6–102; it reads VYHGKISREM…GIVTPLQYPV (97 aa). The segment at 67-92 is interaction with FYN SH3 domain; sequence ETAPGVHKRFFRKVKNLISAFQKPDQ. Lysine 89 bears the N6-acetyllysine mark. Positions 100 to 126 are disordered; sequence YPVEKSSARSPQAPTGRRDSDICLKAP. The span at 115 to 126 shows a compositional bias: basic and acidic residues; that stretch reads GRRDSDICLKAP. Serine 119 carries the phosphoserine modification.

In terms of assembly, interacts with CD84, CD244, LY9, SLAMF1 and FYN. Interacts with NTRK1, NTRK2 and NTRK3.

It localises to the cytoplasm. Its function is as follows. Cytoplasmic adapter regulating receptors of the signaling lymphocytic activation molecule (SLAM) family such as SLAMF1, CD244, LY9, CD84, SLAMF6 and SLAMF7. In SLAM signaling seems to cooperate with SH2D1B/EAT-2. Initially it has been proposed that association with SLAMF1 prevents SLAMF1 binding to inhibitory effectors including INPP5D/SHIP1 and PTPN11/SHP-2. However, by simultaneous interactions, recruits FYN which subsequently phosphorylates and activates SLAMF1. Positively regulates CD244/2B4- and CD84-mediated natural killer (NK) cell functions. Can also promote CD48-, SLAMF6 -, LY9-, and SLAMF7-mediated NK cell activation. In the context of NK cell-mediated cytotoxicity enhances conjugate formation with target cells. May also regulate the activity of the neurotrophin receptors NTRK1, NTRK2 and NTRK3. The sequence is that of SH2 domain-containing protein 1A (Sh2d1a) from Rattus norvegicus (Rat).